The following is a 308-amino-acid chain: Probable very-long-chain enoyl-CoA reductase art-1 (308 aa).

One can recognise a Ubiquitin-like domain in the interval 7–85; it reads VYDAKRTDNL…VLYVRDLGPQ (79 aa). The next 4 helical transmembrane spans lie at 112–132, 169–189, 194–214, and 255–275; these read FIYG…IAFF, WGFA…PPAF, VYFG…IHIL, and WIFF…TAGF.

Belongs to the steroid 5-alpha reductase family.

It localises to the endoplasmic reticulum membrane. It catalyses the reaction a very-long-chain 2,3-saturated fatty acyl-CoA + NADP(+) = a very-long-chain (2E)-enoyl-CoA + NADPH + H(+). It participates in lipid metabolism; fatty acid biosynthesis. Functionally, catalyzes the last of the four reactions of the long-chain fatty acids elongation cycle. This endoplasmic reticulum-bound enzymatic process, allows the addition of 2 carbons to the chain of long- and very long-chain fatty acids/VLCFAs per cycle. This enzyme reduces the trans-2,3-enoyl-CoA fatty acid intermediate to an acyl-CoA that can be further elongated by entering a new cycle of elongation. Thereby, it participates in the production of VLCFAs of different chain lengths that are involved in multiple biological processes as precursors of membrane lipids and lipid mediators. This chain is Probable very-long-chain enoyl-CoA reductase art-1 (art-1), found in Caenorhabditis elegans.